The sequence spans 216 residues: 3-isopropylmalate dehydratase small subunit (216 aa).

It belongs to the LeuD family. LeuD type 1 subfamily. As to quaternary structure, heterodimer of LeuC and LeuD.

The catalysed reaction is (2R,3S)-3-isopropylmalate = (2S)-2-isopropylmalate. It participates in amino-acid biosynthesis; L-leucine biosynthesis; L-leucine from 3-methyl-2-oxobutanoate: step 2/4. Catalyzes the isomerization between 2-isopropylmalate and 3-isopropylmalate, via the formation of 2-isopropylmaleate. The protein is 3-isopropylmalate dehydratase small subunit of Burkholderia mallei (strain NCTC 10247).